Reading from the N-terminus, the 136-residue chain is Ribosome-binding factor A (136 aa).

Belongs to the RbfA family. Monomer. Binds 30S ribosomal subunits, but not 50S ribosomal subunits or 70S ribosomes.

It localises to the cytoplasm. One of several proteins that assist in the late maturation steps of the functional core of the 30S ribosomal subunit. Associates with free 30S ribosomal subunits (but not with 30S subunits that are part of 70S ribosomes or polysomes). Required for efficient processing of 16S rRNA. May interact with the 5'-terminal helix region of 16S rRNA. This Rhizobium etli (strain ATCC 51251 / DSM 11541 / JCM 21823 / NBRC 15573 / CFN 42) protein is Ribosome-binding factor A.